The following is a 138-amino-acid chain: Basic phospholipase A2 homolog Vur-S49 (138 aa).

Residues 1 to 16 form the signal peptide; it reads MRALWIVAVCLIGVEG. Cystine bridges form between Cys-42-Cys-131, Cys-44-Cys-60, Cys-59-Cys-111, Cys-65-Cys-138, Cys-66-Cys-104, Cys-73-Cys-97, and Cys-91-Cys-102. The important for membrane-damaging activities in eukaryotes and bacteria; heparin-binding stretch occupies residues 121 to 133; that stretch reads KKYKVYLRFKCKG.

It belongs to the phospholipase A2 family. Group II subfamily. S49 sub-subfamily. Expressed by the venom gland.

It localises to the secreted. Snake venom phospholipase A2 homolog that lacks enzymatic activity. Is able to suppress the acetylcholine (ACh)-evoked current mediated by alpha-7 (CHRNA7)-similar nAChRs in L.stagnalis neurons (IC(50)=2.18 uM). This activity is only partially reversible and seems to be non-competitive. This chain is Basic phospholipase A2 homolog Vur-S49, found in Vipera renardi (Steppe viper).